A 349-amino-acid polypeptide reads, in one-letter code: DNA-directed RNA polymerase subunit Rpo1N (349 aa).

Residues 306–349 (EDEGEEFAGEQATNLSESADDRMDRDRPSSHGAAPIDVPEVGDD) form a disordered region. Basic and acidic residues predominate over residues 324 to 334 (ADDRMDRDRPS).

This sequence belongs to the RNA polymerase beta' chain family. In terms of assembly, part of the RNA polymerase complex.

The protein localises to the cytoplasm. The catalysed reaction is RNA(n) + a ribonucleoside 5'-triphosphate = RNA(n+1) + diphosphate. Its function is as follows. DNA-dependent RNA polymerase (RNAP) catalyzes the transcription of DNA into RNA using the four ribonucleoside triphosphates as substrates. Forms the clamp head domain. This chain is DNA-directed RNA polymerase subunit Rpo1N, found in Halococcus morrhuae (Micrococcus morrhuae).